A 1655-amino-acid polypeptide reads, in one-letter code: Protein scribble homolog (1655 aa).

A sufficient for targeting to adherens junction and to inhibit cell proliferation region spans residues 1-818 (MLKCIPLWRC…MRVWRERMVE (818 aa)). Phosphoserine is present on Ser37. 16 LRR repeats span residues 37-58 (SLEE…FFRL), 60-81 (NLRK…VANF), 83-104 (QLVE…IKFC), 106-127 (ALEI…FTQL), 129-150 (SLAH…VGNL), 152-174 (NLVT…SFLV), 175-197 (KLEQ…GALP), 198-219 (NLRE…LGNL), 221-243 (RLVC…GGLV), 244-265 (LLTD…IGQL), 267-288 (QLSI…IGDC), 290-312 (NLSE…GKLT), 313-334 (KLTN…IGGC), 336-357 (ALSV…LAHT), 359-381 (ELHV…THLN), and 382-402 (LKAL…QTED). A Phosphothreonine modification is found at Thr378. Disordered stretches follow at residues 417 to 440 (PQQP…WSDA), 459 to 606 (DAEE…IRKD), and 628 to 702 (LLQG…VSAP). The stretch at 458–474 (EDAEEAAAEKRGLQRRA) forms a coiled coil. Position 475 is a phosphothreonine (Thr475). The span at 479 to 494 (SELKVMKRSIEGRRSE) shows a compositional bias: basic and acidic residues. Ser504 carries the phosphoserine modification. The segment covering 537–555 (EGPSAEAQGGSQQEATTAG) has biased composition (low complexity). Composition is skewed to acidic residues over residues 556 to 565 (GEEDAEEDYQ) and 660 to 694 (EEEE…EEDK). Residues 656–701 (RAQKEEEEEEEGSPQEEEEEEEEENRAEEEEASTEEEDKEGAVVSA) are a coiled coil. Position 688 is a phosphoserine (Ser688). A Phosphothreonine modification is found at Thr689. A phosphoserine mark is found at Ser708 and Ser764. The segment at 717–1229 (IEPARIEEEE…SLESISSIDR (513 aa)) is interaction with ARHGEF7. In terms of domain architecture, PDZ 1 spans 728-815 (TLTILRQTGG…AVQMRVWRER (88 aa)). The segment at 728 to 1194 (TLTILRQTGG…TVLVCDGFEA (467 aa)) is required for interaction with VIM. Thr826 carries the post-translational modification Phosphothreonine. A disordered region spans residues 827 to 853 (PLRPEDDYSPRERRGGGLRLPLLPPES). Over residues 829-841 (RPEDDYSPRERRG) the composition is skewed to basic and acidic residues. Phosphoserine occurs at positions 835, 853, 875, and 939. 3 consecutive PDZ domains span residues 862-950 (VACL…EREA), 1004-1093 (EIRL…RRDP), and 1100-1194 (ELCI…GFEA). The segment at 1105-1117 (KAPGERLGISIRG) is interaction with tick-borne encephalitis virus RNA-directed RNA polymerase NS5. Ser1140, Ser1220, Ser1223, Ser1226, Ser1232, Ser1276, Ser1279, Ser1295, Ser1298, Ser1306, and Ser1309 each carry phosphoserine. The segment covering 1227–1242 (IDRELSPEGPGKEKEL) has biased composition (basic and acidic residues). The tract at residues 1227-1246 (IDRELSPEGPGKEKELPGQT) is disordered. A disordered region spans residues 1277–1489 (AGSVQRVPSG…APERALSPAE (213 aa)). Positions 1302–1311 (QQPPSPPSPD) are enriched in pro residues. Thr1342 is subject to Phosphothreonine. Phosphoserine is present on Ser1348. Residues 1353-1365 (SFRERQKYFELEV) show a composition bias toward basic and acidic residues. The residue at position 1378 (Ser1378) is a Phosphoserine. Residues 1379 to 1419 (LVGADDLRKMQEEEARKLQQKRAQMLREAAEAGAEARLALD) adopt a coiled-coil conformation. Residues 1383-1395 (DDLRKMQEEEARK) show a composition bias toward basic and acidic residues. A compositionally biased stretch (low complexity) spans 1409 to 1421 (EAGAEARLALDGE). Over residues 1422-1432 (TLGEEEQEDEQ) the composition is skewed to acidic residues. Residues Ser1437, Ser1445, and Ser1448 each carry the phosphoserine modification. Residues 1461 to 1472 (AKAERRHQERLR) are compositionally biased toward basic and acidic residues. Phosphoserine is present on residues Ser1475, Ser1486, and Ser1508. The interval 1520–1568 (LSRSQEGRGTRGPLERLAEAPSPAPTPSPTPVEDLGPQTSTSPGRLPLS) is disordered. Over residues 1524-1537 (QEGRGTRGPLERLA) the composition is skewed to basic and acidic residues. Ser1541 is subject to Phosphoserine. At Thr1545 the chain carries Phosphothreonine. Ser1547, Ser1561, and Ser1591 each carry phosphoserine. Residues 1622-1655 (GRPSPGAVGPEDVALCSSRRPVRPGRRGLGPVPS) form a disordered region.

It belongs to the LAP (LRR and PDZ) protein family. Interacts with UBE3A. Interacts with PAK1 and PAK2. Interacts (via PDZ domains) with VANGL2. Interacts (via PDZ domains) with LPP and TRIP6; the interaction is direct. Interacts (via PDZ domains) with TJP2. Interacts (via PDZ domains) with APC; may mediate APC targeting to adherens junctions of epithelial cells. Interacts (via PDZ domains) with TSHR; regulates TSHR trafficking and function. Interacts with ARHGEF7 and GIT1; interacts directly with ARHGEF7. Interacts with CTNNB1. Interacts with MAPK12. Interacts (via PDZ domains 1 and 3) with MCC. Interacts with DLG5. Interacts with STK4/MST1 and LATS1 in the presence of DLG5. Interacts (via PDZ domain 3) with CRTAM (via PDZ-binding motif); the interaction promotes CRTAM and SCRIB polarization in a subset of CD4+ T-cells. Interacts with YES1, when YES1 is in a closed conformation; the interaction facilitates YES1 autophosphorylation. Interacts (via PDZ domains) with VIM; the interaction protects SCRIB from proteasomal degradation and facilitates SCRIB localization to intermediate filaments, the interaction is reduced by cell contact inhibition. In terms of assembly, (Microbial infection) Interacts (via fourth PDZ domain) with tick-borne encephalitis virus RNA-directed RNA polymerase NS5; this interaction targets viral NS5 to the cell membrane periphery and nucleus and prevents STAT1 phosphorylation, and thus, the activation of the JAK-STAT signaling pathway. Interacts with HPV E6. Interacts with influenza A virus protein NS1; the interaction results in the translocation of SCRIB from the cell membrane to perinuclear puncta. In terms of processing, ubiquitinated; targeted for UBE3A-dependent multiubiquitination in the presence of high-risk HPV E6 proteins and degraded. Post-translationally, palmitoylated. Could be depalmitoylated by LYPLA1 and/or LYPLA2. Palmitoylation of SCRIB by ZDHHC7 is required for its localization to cell-cell junctions, function in the establishement of epithelial cell polarity and the regulation of downstream signaling pathways important for epithelial cell differentiation. In terms of tissue distribution, expressed in kidney, skeletal muscles, liver, lung, breast, intestine, placenta and skin mainly in epithelial cells (at protein level).

The protein localises to the cell membrane. Its subcellular location is the cell junction. The protein resides in the adherens junction. It is found in the cell projection. It localises to the lamellipodium. The protein localises to the cytoplasm. Its subcellular location is the postsynapse. The protein resides in the presynapse. Functionally, scaffold protein involved in different aspects of polarized cell differentiation regulating epithelial and neuronal morphogenesis and T-cell polarization. Via its interaction with CRTAM, required for the late phase polarization of a subset of CD4+ T-cells, which in turn regulates TCR-mediated proliferation and IFNG and IL22 production. Plays a role in cell directional movement, cell orientation, cell sheet organization and Golgi complex polarization at the cell migration front. Promotes epithelial cell layer barrier function via maintaining cell-cell adhesion. Most probably functions in the establishment of apico-basal cell polarity. May function in cell proliferation regulating progression from G1 to S phase and as a positive regulator of apoptosis for instance during acinar morphogenesis of the mammary epithelium. May regulate cell invasion via MAPK-mediated cell migration and adhesion. May play a role in exocytosis and in the targeting of synaptic vesicles to synapses. Functions as an activator of Rac GTPase activity. This chain is Protein scribble homolog, found in Homo sapiens (Human).